The following is a 690-amino-acid chain: UvrABC system protein B (690 aa).

Residues 39-422 enclose the Helicase ATP-binding domain; the sequence is EGLDDGLSFQ…EQQHAGQVVE (384 aa). 52-59 is a binding site for ATP; it reads GVTGSGKT. Positions 105-128 match the Beta-hairpin motif; it reads YYDYYQPEAYVPSRDLFIEKDSSI. One can recognise a Helicase C-terminal domain in the interval 443-596; that stretch reads QVDDLLAEIG…QIAFNLEHGI (154 aa). A UVR domain is found at 640–675; it reads AREIKRLEKSMMECAKNLEFEKAAAARDDLFRLRER.

Belongs to the UvrB family. As to quaternary structure, forms a heterotetramer with UvrA during the search for lesions. Interacts with UvrC in an incision complex.

The protein localises to the cytoplasm. In terms of biological role, the UvrABC repair system catalyzes the recognition and processing of DNA lesions. A damage recognition complex composed of 2 UvrA and 2 UvrB subunits scans DNA for abnormalities. Upon binding of the UvrA(2)B(2) complex to a putative damaged site, the DNA wraps around one UvrB monomer. DNA wrap is dependent on ATP binding by UvrB and probably causes local melting of the DNA helix, facilitating insertion of UvrB beta-hairpin between the DNA strands. Then UvrB probes one DNA strand for the presence of a lesion. If a lesion is found the UvrA subunits dissociate and the UvrB-DNA preincision complex is formed. This complex is subsequently bound by UvrC and the second UvrB is released. If no lesion is found, the DNA wraps around the other UvrB subunit that will check the other stand for damage. This is UvrABC system protein B from Dechloromonas aromatica (strain RCB).